The chain runs to 297 residues: Trans-enoyl reductase TOXD (297 aa).

Residues 162–165 (STAT) and Tyr203 each bind NADP(+).

It belongs to the zinc-containing alcohol dehydrogenase family. As to quaternary structure, monomer.

Trans-enoyl reductase; part of the diffuse TOX2 gene cluster that mediates the biosynthesis of the HC-toxin, cyclic tetrapeptide of structure cyclo(D-Pro-L-Ala-D-Ala-L-Aeo), where Aeo stands for 2-amino-9,10-epoxi-8-oxodecanoic acid. HC-toxin is a determinant of specificity and virulence in the interaction between the producing fungus and its host, maize. TOXD does not seem to play a role in HC-toxin biosynthesis. The protein is Trans-enoyl reductase TOXD of Cochliobolus carbonum (Maize leaf spot fungus).